The chain runs to 180 residues: Pro-glucagon (180 aa).

The N-terminal stretch at 1 to 20 (MKTIYFVAGLLIMLVQGSWQ) is a signal peptide. Residues 25-58 (DTEENPRSFPASQTEAHEDPDEMNEDKRHSQGTF) are disordered. Ser-54 is modified (phosphoserine). Residues 84-89 (NRNNIA) constitute a propeptide that is removed on maturation. 2 positions are modified to phosphoserine: Ser-105 and Ser-108. Arginine amide is present on Arg-127. A propeptide spanning residues 131–145 (DFPEEVAIAEELGRR) is cleaved from the precursor. Residues Ser-150 and Ser-152 each carry the phosphoserine modification.

This sequence belongs to the glucagon family. Post-translationally, proglucagon is post-translationally processed in a tissue-specific manner in pancreatic A cells and intestinal L cells. In pancreatic A cells, the major bioactive hormone is glucagon cleaved by PCSK2/PC2. In the intestinal L cells PCSK1/PC1 liberates GLP-1, GLP-2, glicentin and oxyntomodulin. GLP-1 is further N-terminally truncated by post-translational processing in the intestinal L cells resulting in GLP-1(7-37) GLP-1-(7-36)amide. The C-terminal amidation is neither important for the metabolism of GLP-1 nor for its effects on the endocrine pancreas. As to expression, secreted in the A cells of the islets of Langerhans. Secreted in the A cells of the islets of Langerhans. Secreted from enteroendocrine L cells throughout the gastrointestinal tract. Also secreted in selected neurons in the brain. In terms of tissue distribution, secreted from enteroendocrine cells throughout the gastrointestinal tract. Also secreted in selected neurons in the brain. As to expression, secreted from enteroendocrine cells throughout the gastrointestinal tract.

It is found in the secreted. Its function is as follows. Plays a key role in glucose metabolism and homeostasis. Regulates blood glucose by increasing gluconeogenesis and decreasing glycolysis. A counterregulatory hormone of insulin, raises plasma glucose levels in response to insulin-induced hypoglycemia. Plays an important role in initiating and maintaining hyperglycemic conditions in diabetes. Potent stimulator of glucose-dependent insulin release. Also stimulates insulin release in response to IL6. Plays important roles on gastric motility and the suppression of plasma glucagon levels. May be involved in the suppression of satiety and stimulation of glucose disposal in peripheral tissues, independent of the actions of insulin. Has growth-promoting activities on intestinal epithelium. May also regulate the hypothalamic pituitary axis (HPA) via effects on LH, TSH, CRH, oxytocin, and vasopressin secretion. Increases islet mass through stimulation of islet neogenesis and pancreatic beta cell proliferation. Inhibits beta cell apoptosis. In terms of biological role, stimulates intestinal growth and up-regulates villus height in the small intestine, concomitant with increased crypt cell proliferation and decreased enterocyte apoptosis. The gastrointestinal tract, from the stomach to the colon is the principal target for GLP-2 action. Plays a key role in nutrient homeostasis, enhancing nutrient assimilation through enhanced gastrointestinal function, as well as increasing nutrient disposal. Stimulates intestinal glucose transport and decreases mucosal permeability. Functionally, significantly reduces food intake. Inhibits gastric emptying in humans. Suppression of gastric emptying may lead to increased gastric distension, which may contribute to satiety by causing a sensation of fullness. Its function is as follows. May modulate gastric acid secretion and the gastro-pyloro-duodenal activity. May play an important role in intestinal mucosal growth in the early period of life. This is Pro-glucagon (Gcg) from Mus musculus (Mouse).